Consider the following 392-residue polypeptide: Chaperone protein DnaJ 1 (392 aa).

In terms of domain architecture, J spans 4 to 67 (DYYEILGVSH…QKRAVFDRGG (64 aa)). The CR-type zinc-finger motif lies at 134–216 (GVTKSLEVDT…CSGEGRVRTT (83 aa)). Positions 147, 150, 164, 167, 190, 193, 204, and 207 each coordinate Zn(2+). CXXCXGXG motif repeat units lie at residues 147–154 (CPKCQGKG), 164–171 (CDTCQGRG), 190–197 (CPTCHGYG), and 204–211 (CQECSGEG). A disordered region spans residues 367 to 392 (ETNASASVEKSGGRGMFSRIKEAFGG).

This sequence belongs to the DnaJ family. Homodimer. Requires Zn(2+) as cofactor.

The protein localises to the cytoplasm. In terms of biological role, participates actively in the response to hyperosmotic and heat shock by preventing the aggregation of stress-denatured proteins and by disaggregating proteins, also in an autonomous, DnaK-independent fashion. Unfolded proteins bind initially to DnaJ; upon interaction with the DnaJ-bound protein, DnaK hydrolyzes its bound ATP, resulting in the formation of a stable complex. GrpE releases ADP from DnaK; ATP binding to DnaK triggers the release of the substrate protein, thus completing the reaction cycle. Several rounds of ATP-dependent interactions between DnaJ, DnaK and GrpE are required for fully efficient folding. Also involved, together with DnaK and GrpE, in the DNA replication of plasmids through activation of initiation proteins. The chain is Chaperone protein DnaJ 1 from Cutibacterium acnes (strain DSM 16379 / KPA171202) (Propionibacterium acnes).